The primary structure comprises 122 residues: Phycocyanin PC645 alpha-2 subunit (122 aa).

Positions 54 and 68 each coordinate (2R,3E)-phycocyanobilin. The mesobiliverdin site is built by Cys70, Lys76, Glu77, and Cys92.

The protein belongs to the phycoerythrin family. In terms of assembly, heterotetramer of 2 different alpha chains and 2 identical beta chains which form 2 alpha-beta heterodimers within the heterotetramer. In terms of processing, contains two phycocyanobilin chromophores and one mesobiliverdin chromophore with binding mediated by both the alpha and beta subunits.

The protein resides in the plastid. It is found in the chloroplast thylakoid membrane. Functionally, light-harvesting photosynthetic tetrapyrrole chromophore-protein from the phycobiliprotein complex. This is Phycocyanin PC645 alpha-2 subunit from Chroomonas sp. (strain CCMP270).